The chain runs to 497 residues: Acetyl-coenzyme A carboxylase carboxyl transferase subunit beta, chloroplastic (497 aa).

Residues 30-50 (GPVENTTVNEDPTRNDTDKNI) form a disordered region. Residues 40-50 (DPTRNDTDKNI) show a composition bias toward basic and acidic residues. Residues 230-497 (VQCECENCYG…FFPLNQNSIK (268 aa)) form the CoA carboxyltransferase N-terminal domain. 4 residues coordinate Zn(2+): C232, C237, C253, and C256. Residues 232–256 (CECENCYGVNYKKSLNSKMNICEQC) form a C4-type zinc finger.

Belongs to the AccD/PCCB family. As to quaternary structure, acetyl-CoA carboxylase is a heterohexamer composed of biotin carboxyl carrier protein, biotin carboxylase and 2 subunits each of ACCase subunit alpha and ACCase plastid-coded subunit beta (accD). Requires Zn(2+) as cofactor.

The protein resides in the plastid. Its subcellular location is the chloroplast stroma. The enzyme catalyses N(6)-carboxybiotinyl-L-lysyl-[protein] + acetyl-CoA = N(6)-biotinyl-L-lysyl-[protein] + malonyl-CoA. It participates in lipid metabolism; malonyl-CoA biosynthesis; malonyl-CoA from acetyl-CoA: step 1/1. Functionally, component of the acetyl coenzyme A carboxylase (ACC) complex. Biotin carboxylase (BC) catalyzes the carboxylation of biotin on its carrier protein (BCCP) and then the CO(2) group is transferred by the transcarboxylase to acetyl-CoA to form malonyl-CoA. The polypeptide is Acetyl-coenzyme A carboxylase carboxyl transferase subunit beta, chloroplastic (Gossypium hirsutum (Upland cotton)).